A 377-amino-acid chain; its full sequence is DNA primase small subunit PriS (377 aa).

Residues Asp-99, Asp-101, and Asp-274 contribute to the active site.

Belongs to the eukaryotic-type primase small subunit family. As to quaternary structure, heterodimer of a small subunit (PriS) and a large subunit (PriL). Mg(2+) serves as cofactor. It depends on Mn(2+) as a cofactor.

In terms of biological role, catalytic subunit of DNA primase, an RNA polymerase that catalyzes the synthesis of short RNA molecules used as primers for DNA polymerase during DNA replication. The small subunit contains the primase catalytic core and has DNA synthesis activity on its own. Binding to the large subunit stabilizes and modulates the activity, increasing the rate of DNA synthesis while decreasing the length of the DNA fragments, and conferring RNA synthesis capability. The DNA polymerase activity may enable DNA primase to also catalyze primer extension after primer synthesis. May also play a role in DNA repair. The sequence is that of DNA primase small subunit PriS from Staphylothermus marinus (strain ATCC 43588 / DSM 3639 / JCM 9404 / F1).